The sequence spans 167 residues: Protein archease (167 aa).

An N-acetylalanine modification is found at alanine 2. Aspartate 39, aspartate 166, and isoleucine 167 together coordinate Ca(2+).

This sequence belongs to the archease family. In terms of assembly, component of the tRNA-splicing ligase complex.

Functionally, component of the tRNA-splicing ligase complex required to facilitate the enzymatic turnover of catalytic subunit RTCB. Together with DDX1, acts by facilitating the guanylylation of RTCB, a key intermediate step in tRNA ligation. The protein is Protein archease (ZBTB8OS) of Homo sapiens (Human).